Here is a 373-residue protein sequence, read N- to C-terminus: Protein translocase subunit SecF (373 aa).

The next 6 membrane-spanning stretches (helical) occupy residues 26–46 (IWYG…AVRG), 142–162 (WQGL…AFEW), 166–186 (LAAF…YALV), 193–213 (GTVI…VVVF), 251–271 (VVAL…LGAG), and 280–300 (LFVG…PLVA). Positions 322-332 (QGAAKGESAES) are enriched in low complexity. The interval 322–373 (QGAAKGESAESAADEGAYDADEPDDAAPAVVGPRNQPASRGRGRGRPSGKRR) is disordered. The segment covering 333–346 (AADEGAYDADEPDD) has biased composition (acidic residues). Residues 362 to 373 (GRGRGRPSGKRR) are compositionally biased toward basic residues.

This sequence belongs to the SecD/SecF family. SecF subfamily. As to quaternary structure, forms a complex with SecD. Part of the essential Sec protein translocation apparatus which comprises SecA, SecYEG and auxiliary proteins SecDF. Other proteins may also be involved.

The protein localises to the cell membrane. Functionally, part of the Sec protein translocase complex. Interacts with the SecYEG preprotein conducting channel. SecDF uses the proton motive force (PMF) to complete protein translocation after the ATP-dependent function of SecA. The sequence is that of Protein translocase subunit SecF from Streptomyces coelicolor (strain ATCC BAA-471 / A3(2) / M145).